The chain runs to 184 residues: Alpha-tubulin N-acetyltransferase (184 aa).

The 174-residue stretch at Met-1–Phe-174 folds into the N-acetyltransferase domain. Acetyl-CoA is bound by residues Phe-108 to Leu-121 and Ser-144 to Lys-153.

It belongs to the acetyltransferase ATAT1 family.

It catalyses the reaction L-lysyl-[alpha-tubulin] + acetyl-CoA = N(6)-acetyl-L-lysyl-[alpha-tubulin] + CoA + H(+). In terms of biological role, specifically acetylates 'Lys-40' in alpha-tubulin on the lumenal side of microtubules. Promotes microtubule destabilization and accelerates microtubule dynamics; this activity may be independent of acetylation activity. Acetylates alpha-tubulin with a slow enzymatic rate, due to a catalytic site that is not optimized for acetyl transfer. Enters the microtubule through each end and diffuses quickly throughout the lumen of microtubules. Acetylates only long/old microtubules because of its slow acetylation rate since it does not have time to act on dynamically unstable microtubules before the enzyme is released. In Plasmodium knowlesi (strain H), this protein is Alpha-tubulin N-acetyltransferase.